We begin with the raw amino-acid sequence, 275 residues long: LIM/homeobox protein Awh (275 aa).

LIM zinc-binding domains follow at residues Arg-6–Ala-67 and Lys-68–Gly-129. At Thr-126 the chain carries Phosphothreonine. A DNA-binding region (homeobox) is located at residues Thr-148–Ile-207. Residues Pro-253–Val-275 are disordered.

In terms of tissue distribution, first detected in neuroblasts in stage 9 embryos. Expressed in all 10 abdominal segments and in the labial segment during early embryogenesis. Expressed in the stage 14 developing epithelium. By embryonic stage 16, expression is refined to the abdominal histoblasts and salivary gland imaginal ring cells. Expressed in both larval and imaginal cells between the salivary gland and the salivary gland imaginal ring, in late third instar larvae. Also expressed in specific areas of the larval wing, leg and eye-antennal disks.

Its subcellular location is the nucleus. Functionally, probable transcription factor. Required for the establishment of a subset of imaginal tissues: the abdominal histoblasts and the salivary gland imaginal rings. The protein is LIM/homeobox protein Awh of Drosophila melanogaster (Fruit fly).